The primary structure comprises 389 residues: Succinate--CoA ligase [ADP-forming] subunit beta (389 aa).

One can recognise an ATP-grasp domain in the interval 9–246 (KEILRRHNAN…ITEEDPYEVK (238 aa)). ATP is bound by residues Lys48, 55–57 (GRG), Glu101, Leu104, and Glu109. Residues Asn201 and Asp215 each contribute to the Mg(2+) site. Residues Asn266 and 323-325 (GIV) each bind substrate.

The protein belongs to the succinate/malate CoA ligase beta subunit family. As to quaternary structure, heterotetramer of two alpha and two beta subunits. Mg(2+) is required as a cofactor.

The enzyme catalyses succinate + ATP + CoA = succinyl-CoA + ADP + phosphate. It catalyses the reaction GTP + succinate + CoA = succinyl-CoA + GDP + phosphate. The protein operates within carbohydrate metabolism; tricarboxylic acid cycle; succinate from succinyl-CoA (ligase route): step 1/1. In terms of biological role, succinyl-CoA synthetase functions in the citric acid cycle (TCA), coupling the hydrolysis of succinyl-CoA to the synthesis of either ATP or GTP and thus represents the only step of substrate-level phosphorylation in the TCA. The beta subunit provides nucleotide specificity of the enzyme and binds the substrate succinate, while the binding sites for coenzyme A and phosphate are found in the alpha subunit. This Leptospira biflexa serovar Patoc (strain Patoc 1 / Ames) protein is Succinate--CoA ligase [ADP-forming] subunit beta.